A 145-amino-acid polypeptide reads, in one-letter code: Bacilliredoxin Acid345_1880 (145 aa).

Belongs to the bacilliredoxin family.

This Koribacter versatilis (strain Ellin345) protein is Bacilliredoxin Acid345_1880.